The primary structure comprises 348 residues: Pheromone P-factor receptor (348 aa).

7 helical membrane passes run 46-69 (LLTGMTLSAQLALGVLTILMVCLL), 79-103 (VFVFNSASIVAMCLRAILNIVTICS), 125-141 (VFNILILLLAPVIIFTA), 162-180 (IMTVISACLTVLVLAFWIT), 207-225 (YFIAKILFAFSIIFHSGVF), 249-267 (CILVISCQCLIVPATFTII), and 283-301 (CLLIISLPLSSLWASSTAL).

This sequence belongs to the G-protein coupled receptor 4 family.

The protein resides in the membrane. In terms of biological role, receptor for the peptide pheromone P-factor, a mating factor of S.pombe. Pheromone signaling is essential for initiation of meiosis in S.pombe; P-factor signaling alone may be sufficient. This chain is Pheromone P-factor receptor (mam2), found in Schizosaccharomyces pombe (strain 972 / ATCC 24843) (Fission yeast).